Here is a 161-residue protein sequence, read N- to C-terminus: NAD(P)H-quinone oxidoreductase subunit I, chloroplastic (161 aa).

2 4Fe-4S ferredoxin-type domains span residues 55-84 (GRIHFEFDKCIACEVCVRVCPIDLPVVDWK) and 95-124 (LNYSIDFGICIFCGNCIEYCPTNCLSMTEE). [4Fe-4S] cluster is bound by residues C64, C67, C70, C74, C104, C107, C110, and C114.

It belongs to the complex I 23 kDa subunit family. In terms of assembly, NDH is composed of at least 16 different subunits, 5 of which are encoded in the nucleus. It depends on [4Fe-4S] cluster as a cofactor.

It is found in the plastid. Its subcellular location is the chloroplast thylakoid membrane. The enzyme catalyses a plastoquinone + NADH + (n+1) H(+)(in) = a plastoquinol + NAD(+) + n H(+)(out). It catalyses the reaction a plastoquinone + NADPH + (n+1) H(+)(in) = a plastoquinol + NADP(+) + n H(+)(out). NDH shuttles electrons from NAD(P)H:plastoquinone, via FMN and iron-sulfur (Fe-S) centers, to quinones in the photosynthetic chain and possibly in a chloroplast respiratory chain. The immediate electron acceptor for the enzyme in this species is believed to be plastoquinone. Couples the redox reaction to proton translocation, and thus conserves the redox energy in a proton gradient. This chain is NAD(P)H-quinone oxidoreductase subunit I, chloroplastic, found in Lotus japonicus (Lotus corniculatus var. japonicus).